Reading from the N-terminus, the 390-residue chain is Transposase for insertion sequence element IS21 (390 aa).

The 62-residue stretch at 5–66 (EDFYMIKQMR…PFMDYIDMRL (62 aa)) folds into the HTH IS21-type domain. The segment at residues 20 to 39 (IVDIATQIGCSERTVRRYLK) is a DNA-binding region (H-T-H motif). The Integrase catalytic domain maps to 111-285 (FETQPRYQLQ…TPEQRFALEQ (175 aa)).

Belongs to the transposase IS21/IS408/IS1162 family.

Its function is as follows. Involved in the transposition of the insertion sequence. The protein is Transposase for insertion sequence element IS21 (istA) of Pseudomonas aeruginosa.